The primary structure comprises 478 residues: Puromycin-sensitive aminopeptidase-like protein (478 aa).

Residues glutamate 180 and 316–320 each bind substrate; that span reads GAMEN. Histidine 352 is a binding site for Zn(2+). The active-site Proton acceptor is the glutamate 353. Residues histidine 356 and glutamate 375 each coordinate Zn(2+).

It belongs to the peptidase M1 family. Zn(2+) is required as a cofactor.

In terms of biological role, aminopeptidase with broad substrate specificity to several peptides. The protein is Puromycin-sensitive aminopeptidase-like protein (NPEPPSL1) of Homo sapiens (Human).